Here is a 221-residue protein sequence, read N- to C-terminus: Ras-related protein Rab-27A (221 aa).

The residue at position 2 (Ser-2) is an N-acetylserine. Ser-2 is subject to Phosphoserine. 16–24 (GDSGVGKTS) contributes to the GTP binding site. The Effector region motif lies at 38 to 46 (FITTVGIDF). Residues 74-78 (DTAGQ), 133-136 (NKSD), and 163-165 (SAA) contribute to the GTP site. A disulfide bridge links Cys-123 with Cys-188. Residues Cys-219 and Cys-221 are each lipidated (S-geranylgeranyl cysteine). Cys-221 carries the post-translational modification Cysteine methyl ester.

It belongs to the small GTPase superfamily. Rab family. In terms of assembly, binds SYTL1, SLAC2B, MYRIP, SYTL3, SYTL4 and SYTL5. Interacts with RPH3A and RPH3A. Binds MLPH and SYTL2. Interacts with UNC13D. Does not interact with the BLOC-3 complex (heterodimer of HPS1 and HPS4). Interacts (GDP-bound form preferentially) with DENND10. As to expression, high levels in eye, intestine, lung, pancreas and spleen, and low or absent in brain, liver, heart, kidney, and skeletal muscle.

The protein localises to the membrane. It localises to the melanosome. It is found in the late endosome. Its subcellular location is the lysosome. The catalysed reaction is GTP + H2O = GDP + phosphate + H(+). With respect to regulation, regulated by guanine nucleotide exchange factors (GEFs) which promote the exchange of bound GDP for free GTP, GTPase activating proteins (GAPs) which increase the GTP hydrolysis activity, and GDP dissociation inhibitors which inhibit the dissociation of the nucleotide from the GTPase. Activated by GEFs such as DENND10. Functionally, small GTPase which cycles between active GTP-bound and inactive GDP-bound states. In its active state, binds to a variety of effector proteins to regulate homeostasis of late endocytic pathway, including endosomal positioning, maturation and secretion. Plays a role in cytotoxic granule exocytosis in lymphocytes. Required for both granule maturation and granule docking and priming at the immunologic synapse. In Rattus norvegicus (Rat), this protein is Ras-related protein Rab-27A (Rab27a).